Reading from the N-terminus, the 180-residue chain is UPF0149 protein XAC3406 (180 aa).

Belongs to the UPF0149 family.

In Xanthomonas axonopodis pv. citri (strain 306), this protein is UPF0149 protein XAC3406.